Reading from the N-terminus, the 154-residue chain is Small ribosomal subunit protein uS15 (154 aa).

The span at 1 to 10 shows a compositional bias: basic residues; that stretch reads MARMHSRRRG. The disordered stretch occupies residues 1–32; the sequence is MARMHSRRRGSSGSDRPTADEPPEWSEVDEDA. The span at 21–32 shows a compositional bias: acidic residues; it reads EPPEWSEVDEDA.

The protein belongs to the universal ribosomal protein uS15 family. In terms of assembly, part of the 30S ribosomal subunit.

The polypeptide is Small ribosomal subunit protein uS15 (Natronomonas pharaonis (strain ATCC 35678 / DSM 2160 / CIP 103997 / JCM 8858 / NBRC 14720 / NCIMB 2260 / Gabara) (Halobacterium pharaonis)).